The primary structure comprises 467 residues: Cytochrome P450 76A1 (467 aa).

Cys-410 contacts heme.

The protein belongs to the cytochrome P450 family. Heme serves as cofactor.

The polypeptide is Cytochrome P450 76A1 (CYP76A1) (Solanum melongena (Eggplant)).